The sequence spans 207 residues: Guanylate kinase (207 aa).

One can recognise a Guanylate kinase-like domain in the interval 4–184; the sequence is GTLYIVSAPS…ALADLHTIIR (181 aa). 11 to 18 provides a ligand contact to ATP; it reads APSGAGKS.

This sequence belongs to the guanylate kinase family.

The protein resides in the cytoplasm. It carries out the reaction GMP + ATP = GDP + ADP. In terms of biological role, essential for recycling GMP and indirectly, cGMP. The protein is Guanylate kinase of Photorhabdus laumondii subsp. laumondii (strain DSM 15139 / CIP 105565 / TT01) (Photorhabdus luminescens subsp. laumondii).